A 122-amino-acid chain; its full sequence is Large ribosomal subunit protein uL14 (122 aa).

Belongs to the universal ribosomal protein uL14 family. In terms of assembly, part of the 50S ribosomal subunit. Forms a cluster with proteins L3 and L19. In the 70S ribosome, L14 and L19 interact and together make contacts with the 16S rRNA in bridges B5 and B8.

In terms of biological role, binds to 23S rRNA. Forms part of two intersubunit bridges in the 70S ribosome. In Corynebacterium diphtheriae (strain ATCC 700971 / NCTC 13129 / Biotype gravis), this protein is Large ribosomal subunit protein uL14.